Here is a 64-residue protein sequence, read N- to C-terminus: U6-theraphotoxin-Cg1a (64 aa).

An N-terminal signal peptide occupies residues 1-20 (MTRKILAVLLVFTLVACNNA). A propeptide spanning residues 21-38 (EKYSETDVEDSPMIQERR) is cleaved from the precursor. Intrachain disulfides connect cysteine 39–cysteine 55, cysteine 46–cysteine 58, and cysteine 54–cysteine 63.

This sequence belongs to the neurotoxin 36 family. 02 subfamily. Expressed by the venom gland.

The protein localises to the secreted. Its function is as follows. Probable ion channel inhibitor. This is U6-theraphotoxin-Cg1a from Chilobrachys guangxiensis (Chinese earth tiger tarantula).